The sequence spans 759 residues: NADP-dependent malic enzyme (759 aa).

The segment at 1–428 (MDDQLKQSAL…KLTEFVYKTN (428 aa)) is malic enzyme. Y39 functions as the Proton donor in the catalytic mechanism. At K56 the chain carries N6-acetyllysine. The Proton acceptor role is filled by K94. Residues E136, D137, and D162 each contribute to the a divalent metal cation site. NADP(+) is bound by residues 195 to 198 (AGAA), N288, and N320. Positions 429-759 (LFMKPIFSQA…AVVEAQTQPL (331 aa)) are phosphate acetyltransferase; required for oligomerization, inhibition by acetyl-CoA and activation by glutamate, aspartate, and glucose-6-phosphate.

In the N-terminal section; belongs to the malic enzymes family. This sequence in the C-terminal section; belongs to the phosphate acetyltransferase and butyryltransferase family. Homooligomer, possibly an octamer. Mg(2+) is required as a cofactor. The cofactor is Mn(2+).

The catalysed reaction is (S)-malate + NADP(+) = pyruvate + CO2 + NADPH. The enzyme catalyses oxaloacetate + H(+) = pyruvate + CO2. With respect to regulation, inhibited by 4 mM Mg(2+) and acetyl-CoA, competitively inhibited by fumarate and oxaloacetate. Activated by glutamate and aspartate, glucose-6-phosphate, acetyl-phosphate and 2 mM KCl. Its function is as follows. Catalyzes the decarboxylation of malate to pyruvate. In vitro, shows malolactic enzyme activity in the presence of NADPH. However, it is unlikely that this activity is of relevance in E.coli, which produces little NADPH. The protein is NADP-dependent malic enzyme (maeB) of Escherichia coli (strain K12).